We begin with the raw amino-acid sequence, 425 residues long: MVVHWTIVDEIRLLRWASEFKPAGIHKHFHMFCIVERMNSPDKYPVTLLQKETMKLGKVFTAKDIWDKLSQSYNLEKIDEMENTYSLEATTESSRNGNGNGDDAEIHEETLLELNNRIRVRKQDFTLPWEEYGELILENARKSPNSNEEYPRVEDMNEKDSTIPKESPSTDLKNDNNKQEKNATIKVKELPEYHTEENDSPIDVQKEPIKEVQSDEKELQREHMSEEEQKMKSTNKTAAPVRKSQRLKRSKEVKFEDEEKEEIEEDNTKDEEQKEKKEEIQEPKITHNEEVDKEKNENEEGDDEREKSTSYENTNGSESEGVDEGVDEELGYESEREAEGKGKQIESEGGNLKKKTENKKGDDQQDDTKKDSKDKNEPLAKRTRHSSSTGNTSNETSPKRKRRKAGSRKNSPPATRVSSRLRNKK.

A disordered region spans residues 143-425; that stretch reads SPNSNEEYPR…RVSSRLRNKK (283 aa). 2 stretches are compositionally biased toward basic and acidic residues: residues 149 to 163 and 172 to 197; these read EYPR…DSTI and LKND…HTEE. A phosphoserine mark is found at Ser-200 and Ser-225. Basic and acidic residues predominate over residues 204–231; it reads VQKEPIKEVQSDEKELQREHMSEEEQKM. Positions 209 to 310 form a coiled coil; the sequence is IKEVQSDEKE…GDDEREKSTS (102 aa). The segment covering 255–269 has biased composition (acidic residues); sequence FEDEEKEEIEEDNTK. The segment covering 270-309 has biased composition (basic and acidic residues); that stretch reads DEEQKEKKEEIQEPKITHNEEVDKEKNENEEGDDEREKST. Positions 320-332 are enriched in acidic residues; the sequence is EGVDEGVDEELGY. 2 stretches are compositionally biased toward basic and acidic residues: residues 333-346 and 354-380; these read ESER…KQIE and KKTE…EPLA. The span at 386–396 shows a compositional bias: low complexity; that stretch reads SSSTGNTSNET. Residues 408–418 are compositionally biased toward polar residues; sequence RKNSPPATRVS.

The protein belongs to the EAF7 family. Component of the NuA4 histone acetyltransferase complex composed of at least ACT1, ARP4, YAF9, VID21, SWC4, EAF3, EAF5, EAF6, EAF7, EPL1, ESA1, TRA1 and YNG2.

It localises to the nucleus. Component of the NuA4 histone acetyltransferase complex which is involved in transcriptional activation of selected genes principally by acetylation of nucleosomal histone H4 and H2A. The NuA4 complex is also involved in DNA repair. This chain is Chromatin modification-related protein EAF7 (EAF7), found in Saccharomyces cerevisiae (strain ATCC 204508 / S288c) (Baker's yeast).